Consider the following 638-residue polypeptide: Homeobox protein 10 (638 aa).

Disordered stretches follow at residues 23-55 (ETQPTTPTTQPTTPTTNTISTTTNTITSTLNTN), 76-139 (TDEN…VNTN), and 195-219 (IANEDKESLPEPQTNSNVNGNEEAK). Composition is skewed to low complexity over residues 24–55 (TQPTTPTTQPTTPTTNTISTTTNTITSTLNTN) and 80–139 (NTSV…VNTN). Residues 205–214 (EPQTNSNVNG) are compositionally biased toward polar residues. The segment at residues 301 to 360 (NKKKRQRTSPEQLAILEQIFETDKMPSQQIRVRLANQLGMSSRRVQIWFQNKRAKVKRGG) is a DNA-binding region (homeobox). 2 disordered regions span residues 381–431 (EDED…TSSD) and 448–638 (SSSS…IVKN). Composition is skewed to low complexity over residues 388–411 (SLTIDESGNNNNNSGNNNNNNNNG), 419–430 (LSSSPTNLNTSS), and 462–501 (NNTNNNNNNNNNNNNNNNNNNNNNNNHTTTTTTTTTTTTT). Composition is skewed to polar residues over residues 502 to 522 (SSSPPLTSFNFQLNQSLNKLT) and 545 to 573 (SLNSTASSLPSFPQIKLNSSSKHIPTDKQ). Residues 575-625 (NSDFSNFNNNNNNNNNNNNNNNNNNNINNNGNNNSNNNDSNNNNNKSNFSD) are compositionally biased toward low complexity.

Its subcellular location is the nucleus. In terms of biological role, putative transcription factor. The chain is Homeobox protein 10 (hbx10) from Dictyostelium discoideum (Social amoeba).